We begin with the raw amino-acid sequence, 45 residues long: uncharacterized protein (45 aa).

This is an uncharacterized protein from Methanocaldococcus jannaschii (strain ATCC 43067 / DSM 2661 / JAL-1 / JCM 10045 / NBRC 100440) (Methanococcus jannaschii).